The following is a 444-amino-acid chain: uncharacterized protein (444 aa).

The region spanning 1-69 is the HTH gntR-type domain; that stretch reads MEKYMSLLTR…PKSGYYIVKK (69 aa). Positions 29-48 form a DNA-binding region, H-T-H motif; it reads IRQLSARYQVSKSTVIRALQ. N6-(pyridoxal phosphate)lysine is present on lysine 286.

In the C-terminal section; belongs to the class-I pyridoxal-phosphate-dependent aminotransferase family. Pyridoxal 5'-phosphate is required as a cofactor.

This is an uncharacterized protein from Bacillus subtilis (strain 168).